A 347-amino-acid chain; its full sequence is Protein pelota homolog (347 aa).

It belongs to the eukaryotic release factor 1 family. Pelota subfamily. In terms of assembly, monomer. The cofactor is a divalent metal cation.

It localises to the cytoplasm. Its function is as follows. May function in recognizing stalled ribosomes, interact with stem-loop structures in stalled mRNA molecules, and effect endonucleolytic cleavage of the mRNA. May play a role in the release non-functional ribosomes and degradation of damaged mRNAs. Has endoribonuclease activity. This chain is Protein pelota homolog, found in Methanococcoides burtonii (strain DSM 6242 / NBRC 107633 / OCM 468 / ACE-M).